We begin with the raw amino-acid sequence, 141 residues long: Protein X (141 aa).

The segment covering 25 to 48 (SSGPSFPRPAAGSAASSASSPSPS) has biased composition (low complexity). Residues 25-52 (SSGPSFPRPAAGSAASSASSPSPSDESD) are disordered. The tract at residues 68 to 113 (PCCLVFTCADLRTMDSTVNFVSWHANRQLGMPSKDLWTPYIKDQLL) is mitochondrial targeting sequence.

Belongs to the orthohepadnavirus protein X family. In terms of assembly, may form homodimer. May interact with host CEBPA, CFLAR, CREB1, DDB1, E4F1, HBXIP, HSPD1/HSP60, NFKBIA, POLR2E and SMAD4. Interacts with host SMC5-SMC6 complex and induces its degradation. Interacts with host TRPC4AP; leading to prevent ubiquitination of TRPC4AP. Interacts with host PLSCR1; this interaction promotes ubiquitination and degradation of HBx and impairs HBx-mediated cell proliferation. Post-translationally, a fraction may be phosphorylated in insect cells and HepG2 cells, a human hepatoblastoma cell line. Phosphorylated in vitro by host protein kinase C or mitogen-activated protein kinase. N-acetylated in insect cells.

It localises to the host cytoplasm. The protein resides in the host nucleus. Its subcellular location is the host mitochondrion. Its function is as follows. Multifunctional protein that plays a role in silencing host antiviral defenses and promoting viral transcription. Does not seem to be essential for HBV infection. May be directly involved in development of cirrhosis and liver cancer (hepatocellular carcinoma). Most of cytosolic activities involve modulation of cytosolic calcium. The effect on apoptosis is controversial depending on the cell types in which the studies have been conducted. May induce apoptosis by localizing in mitochondria and causing loss of mitochondrial membrane potential. May also modulate apoptosis by binding host CFLAR, a key regulator of the death-inducing signaling complex (DISC). Promotes viral transcription by using the host E3 ubiquitin ligase DDB1 to target the SMC5-SMC6 complex to proteasomal degradation. This host complex would otherwise bind to viral episomal DNA, and prevents its transcription. Moderately stimulates transcription of many different viral and cellular transcription elements. Promoters and enhancers stimulated by HBx contain DNA binding sites for NF-kappa-B, AP-1, AP-2, c-EBP, ATF/CREB, or the calcium-activated factor NF-AT. This chain is Protein X, found in Marmota monax (Woodchuck).